The sequence spans 494 residues: 3-octaprenyl-4-hydroxybenzoate carboxy-lyase (494 aa).

Residue N172 participates in Mn(2+) binding. Residues 175–177 (IYR), 189–191 (RWL), and 194–195 (RG) contribute to the prenylated FMN site. E238 is a Mn(2+) binding site. The Proton donor role is filled by D287.

This sequence belongs to the UbiD family. As to quaternary structure, homohexamer. Requires prenylated FMN as cofactor. It depends on Mn(2+) as a cofactor.

It localises to the cell membrane. It carries out the reaction a 4-hydroxy-3-(all-trans-polyprenyl)benzoate + H(+) = a 2-(all-trans-polyprenyl)phenol + CO2. Its pathway is cofactor biosynthesis; ubiquinone biosynthesis. Its function is as follows. Catalyzes the decarboxylation of 3-octaprenyl-4-hydroxy benzoate to 2-octaprenylphenol, an intermediate step in ubiquinone biosynthesis. The chain is 3-octaprenyl-4-hydroxybenzoate carboxy-lyase from Shigella flexneri serotype 5b (strain 8401).